The sequence spans 557 residues: DNA 3'-5' helicase XPB (557 aa).

Residues 1 to 135 (MTDGPLIVQS…APLLGTRIAP (135 aa)) are required for protein stability or solubility. A Helicase ATP-binding domain is found at 190-344 (VDNFWNGGSG…DVFSLIGPKR (155 aa)). An ATP-binding site is contributed by 203 to 210 (LPCGAGKT). The short motif at 298-301 (DEVH) is the DEAH box element. One can recognise a Helicase C-terminal domain in the interval 398–544 (RVVEKLVAQH…AYRIVDADDI (147 aa)).

Belongs to the helicase family. RAD25/XPB subfamily. As to quaternary structure, monomer. The cofactor is Mn(2+). Requires Mg(2+) as cofactor. Ca(2+) serves as cofactor.

The enzyme catalyses Couples ATP hydrolysis with the unwinding of duplex DNA by translocating in the 3'-5' direction.. It carries out the reaction ATP + H2O = ADP + phosphate + H(+). ATP-dependent 3'-5' DNA helicase, unwinds 3'-overhangs, 3'- flaps, and splayed-arm DNA substrates but not 5'-overhangs or 5'-flap substrates. Requires ATP hydrolysis for activity; the ATPase activity is DNA-dependent and requires a minimum of 4 single-stranded nucleotides (nt) with 6-10 nt providing all necessary interactions for full processive unwinding. The ATPase prefers ATP over CTP or GTP, is almost inactive with TTP. The protein is DNA 3'-5' helicase XPB of Kineococcus radiotolerans (strain ATCC BAA-149 / DSM 14245 / SRS30216).